Consider the following 459-residue polypeptide: UDP-N-acetylmuramate--L-alanine ligase (459 aa).

An ATP-binding site is contributed by 113 to 119 (GSHGKTT).

Belongs to the MurCDEF family.

The protein resides in the cytoplasm. The catalysed reaction is UDP-N-acetyl-alpha-D-muramate + L-alanine + ATP = UDP-N-acetyl-alpha-D-muramoyl-L-alanine + ADP + phosphate + H(+). Its pathway is cell wall biogenesis; peptidoglycan biosynthesis. Functionally, cell wall formation. This is UDP-N-acetylmuramate--L-alanine ligase from Persephonella marina (strain DSM 14350 / EX-H1).